The sequence spans 276 residues: 4-diphosphocytidyl-2-C-methyl-D-erythritol kinase (276 aa).

Lysine 13 is a catalytic residue. 94–104 (PHAGGIGGGSA) is an ATP binding site. Aspartate 131 is a catalytic residue.

Belongs to the GHMP kinase family. IspE subfamily.

The catalysed reaction is 4-CDP-2-C-methyl-D-erythritol + ATP = 4-CDP-2-C-methyl-D-erythritol 2-phosphate + ADP + H(+). It participates in isoprenoid biosynthesis; isopentenyl diphosphate biosynthesis via DXP pathway; isopentenyl diphosphate from 1-deoxy-D-xylulose 5-phosphate: step 3/6. Functionally, catalyzes the phosphorylation of the position 2 hydroxy group of 4-diphosphocytidyl-2C-methyl-D-erythritol. In Jannaschia sp. (strain CCS1), this protein is 4-diphosphocytidyl-2-C-methyl-D-erythritol kinase.